The chain runs to 397 residues: Argininosuccinate synthase (397 aa).

9-17 (AYSGGLDTS) serves as a coordination point for ATP. Residue tyrosine 86 participates in L-citrulline binding. Glycine 116 is a binding site for ATP. Residues threonine 118, asparagine 122, and aspartate 123 each coordinate L-aspartate. Asparagine 122 lines the L-citrulline pocket. L-citrulline is bound by residues arginine 126, serine 174, glutamate 259, and tyrosine 271.

It belongs to the argininosuccinate synthase family. Type 1 subfamily. Homotetramer.

It localises to the cytoplasm. The enzyme catalyses L-citrulline + L-aspartate + ATP = 2-(N(omega)-L-arginino)succinate + AMP + diphosphate + H(+). It functions in the pathway amino-acid biosynthesis; L-arginine biosynthesis; L-arginine from L-ornithine and carbamoyl phosphate: step 2/3. In Lactococcus lactis subsp. cremoris (strain SK11), this protein is Argininosuccinate synthase.